The chain runs to 81 residues: Photosystem I iron-sulfur center (81 aa).

4Fe-4S ferredoxin-type domains follow at residues 2-31 and 39-68; these read AHSVKIYDTCIGCTQCVRACPTDVLEMIPW and IASAPRTEDCVGCKRCESACPTDFLSVRVY. [4Fe-4S] cluster-binding residues include cysteine 11, cysteine 14, cysteine 17, cysteine 21, cysteine 48, cysteine 51, cysteine 54, and cysteine 58.

The eukaryotic PSI reaction center is composed of at least 11 subunits. It depends on [4Fe-4S] cluster as a cofactor.

Its subcellular location is the plastid. It localises to the chloroplast thylakoid membrane. It catalyses the reaction reduced [plastocyanin] + hnu + oxidized [2Fe-2S]-[ferredoxin] = oxidized [plastocyanin] + reduced [2Fe-2S]-[ferredoxin]. Functionally, apoprotein for the two 4Fe-4S centers FA and FB of photosystem I (PSI); essential for photochemical activity. FB is the terminal electron acceptor of PSI, donating electrons to ferredoxin. The C-terminus interacts with PsaA/B/D and helps assemble the protein into the PSI complex. Required for binding of PsaD and PsaE to PSI. PSI is a plastocyanin-ferredoxin oxidoreductase, converting photonic excitation into a charge separation, which transfers an electron from the donor P700 chlorophyll pair to the spectroscopically characterized acceptors A0, A1, FX, FA and FB in turn. The chain is Photosystem I iron-sulfur center from Staurastrum punctulatum (Green alga).